A 126-amino-acid polypeptide reads, in one-letter code: Aspartate 1-decarboxylase (126 aa).

The active-site Schiff-base intermediate with substrate; via pyruvic acid is serine 25. Residue serine 25 is modified to Pyruvic acid (Ser). Threonine 57 is a substrate binding site. Tyrosine 58 functions as the Proton donor in the catalytic mechanism. Residue glycine 73–alanine 75 coordinates substrate.

Belongs to the PanD family. Heterooctamer of four alpha and four beta subunits. The cofactor is pyruvate. In terms of processing, is synthesized initially as an inactive proenzyme, which is activated by self-cleavage at a specific serine bond to produce a beta-subunit with a hydroxyl group at its C-terminus and an alpha-subunit with a pyruvoyl group at its N-terminus.

Its subcellular location is the cytoplasm. It carries out the reaction L-aspartate + H(+) = beta-alanine + CO2. It participates in cofactor biosynthesis; (R)-pantothenate biosynthesis; beta-alanine from L-aspartate: step 1/1. Catalyzes the pyruvoyl-dependent decarboxylation of aspartate to produce beta-alanine. The polypeptide is Aspartate 1-decarboxylase (Thioalkalivibrio sulfidiphilus (strain HL-EbGR7)).